Here is a 401-residue protein sequence, read N- to C-terminus: Alkane 1-monooxygenase (401 aa).

Topologically, residues 1–20 are cytoplasmic; that stretch reads MLEKHRVLDSAPEYVDKKKY. The chain crosses the membrane as a helical span at residues 21–39; the sequence is LWILSTLWPATPMIGIWLA. Over 40–41 the chain is Periplasmic; it reads NE. Residues 42-62 form a helical membrane-spanning segment; that stretch reads TGWGIFYGLVLLVWYGALPLL. The Cytoplasmic portion of the chain corresponds to 63–88; it reads DAMFGEDFNNPPEEVVPKLEKERYYR. Residues 89 to 111 traverse the membrane as a helical segment; it reads VLTYLTVPMHYAALIVSAWWVGT. The Periplasmic segment spans residues 112 to 113; the sequence is QP. The chain crosses the membrane as a helical span at residues 114-134; that stretch reads MSWLEIGALALSLGIVNGLAL. The Cytoplasmic segment spans residues 135-228; sequence NTGHELGHKK…QSVWSFDNEI (94 aa). The Fe cation site is built by histidine 138, histidine 142, histidine 168, histidine 172, and histidine 173. Residues 229–249 form a helical membrane-spanning segment; that stretch reads LQPMIITVILYAVLLALFGPK. A topological domain (periplasmic) is located at residue methionine 250. A helical membrane pass occupies residues 251–270; that stretch reads LVFLPIQMAFGWWQLTSANY. Residues 271 to 401 are Cytoplasmic-facing; that stretch reads IEHYGLLRQK…HSSSTSAVAS (131 aa). Fe cation is bound by residues histidine 312, histidine 315, and histidine 316.

This sequence belongs to the fatty acid desaturase type 1 family. AlkB subfamily. Fe(3+) is required as a cofactor.

Its subcellular location is the cell inner membrane. It catalyses the reaction octane + 2 reduced [rubredoxin] + O2 + 2 H(+) = 2 oxidized [rubredoxin] + octan-1-ol + H2O. It participates in hydrocarbon metabolism; alkane degradation. Catalyzes the hydroxylation of n-alkanes and fatty acids in the presence of a NADH-rubredoxin reductase and rubredoxin. In Ectopseudomonas oleovorans (Pseudomonas oleovorans), this protein is Alkane 1-monooxygenase (alkB).